A 318-amino-acid polypeptide reads, in one-letter code: D-alanine--D-alanine ligase (318 aa).

The region spanning 116–311 (KQVWQSLGIP…FQQLVLAILA (196 aa)) is the ATP-grasp domain. 142–197 (SAELGFPLIVKPAHEGSSIGMAKVNSEQELVAAWKDAAKYDSQVLVEQWIHGPEFT) contacts ATP. Mg(2+) is bound by residues D265, E278, and N280.

It belongs to the D-alanine--D-alanine ligase family. Requires Mg(2+) as cofactor. It depends on Mn(2+) as a cofactor.

It is found in the cytoplasm. It catalyses the reaction 2 D-alanine + ATP = D-alanyl-D-alanine + ADP + phosphate + H(+). The protein operates within cell wall biogenesis; peptidoglycan biosynthesis. Its function is as follows. Cell wall formation. The protein is D-alanine--D-alanine ligase of Pseudomonas entomophila (strain L48).